Reading from the N-terminus, the 284-residue chain is Bifunctional protein FolD (284 aa).

NADP(+) contacts are provided by residues 166-168 (GRS) and serine 191.

It belongs to the tetrahydrofolate dehydrogenase/cyclohydrolase family. As to quaternary structure, homodimer.

It catalyses the reaction (6R)-5,10-methylene-5,6,7,8-tetrahydrofolate + NADP(+) = (6R)-5,10-methenyltetrahydrofolate + NADPH. The catalysed reaction is (6R)-5,10-methenyltetrahydrofolate + H2O = (6R)-10-formyltetrahydrofolate + H(+). It functions in the pathway one-carbon metabolism; tetrahydrofolate interconversion. Functionally, catalyzes the oxidation of 5,10-methylenetetrahydrofolate to 5,10-methenyltetrahydrofolate and then the hydrolysis of 5,10-methenyltetrahydrofolate to 10-formyltetrahydrofolate. The chain is Bifunctional protein FolD from Leptospira interrogans serogroup Icterohaemorrhagiae serovar copenhageni (strain Fiocruz L1-130).